An 811-amino-acid chain; its full sequence is Glycerol-3-phosphate acyltransferase (811 aa).

The HXXXXD motif signature appears at 305 to 310 (CHRSHI).

It belongs to the GPAT/DAPAT family.

Its subcellular location is the cell inner membrane. It catalyses the reaction sn-glycerol 3-phosphate + an acyl-CoA = a 1-acyl-sn-glycero-3-phosphate + CoA. Its pathway is phospholipid metabolism; CDP-diacylglycerol biosynthesis; CDP-diacylglycerol from sn-glycerol 3-phosphate: step 1/3. In Histophilus somni (strain 129Pt) (Haemophilus somnus), this protein is Glycerol-3-phosphate acyltransferase.